We begin with the raw amino-acid sequence, 251 residues long: Adapter protein MecA (251 aa).

This sequence belongs to the MecA family. In terms of assembly, homodimer.

In terms of biological role, enables the recognition and targeting of unfolded and aggregated proteins to the ClpC protease or to other proteins involved in proteolysis. The protein is Adapter protein MecA of Streptococcus agalactiae serotype III (strain NEM316).